The chain runs to 65 residues: Large ribosomal subunit protein bL35 (65 aa).

Residues 1–22 form a disordered region; the sequence is MPKIKTLRSAAKRFKKTASGKF. A compositionally biased stretch (basic residues) spans 10-22; that stretch reads AAKRFKKTASGKF.

The protein belongs to the bacterial ribosomal protein bL35 family.

This chain is Large ribosomal subunit protein bL35, found in Buchnera aphidicola subsp. Schizaphis graminum (strain Sg).